Here is a 310-residue protein sequence, read N- to C-terminus: MTNKLEQLKQYSDVVADTGDIEAIARYKPLDATTNPSLLYKAAQMEQYAPLVQDALSSTDSIEAACDKIAVAIGCEILKIVPGRVSTEVDARLSFNTNASIEKAKHLIGLYEEAGISKERVLIKLASTWEGIRAAEVLEKEGINCNLTLLFSFSQAAACADAGAFLISPFVGRILDWYKANTDQKEYAPMEDPGVVSVTRIYNYYKQHGYNTVVMGASFRNTGELEALAGCDRLTISPQLLGELEADTGELKRVLTPENSGEAIAKLIEDEAAFRFSNNEDAMATEKLSQGIRGFVADQVNLENFLKSKA.

The Schiff-base intermediate with substrate role is filled by Lys124.

Belongs to the transaldolase family. Type 1 subfamily. In terms of assembly, homodimer.

The protein resides in the cytoplasm. The enzyme catalyses D-sedoheptulose 7-phosphate + D-glyceraldehyde 3-phosphate = D-erythrose 4-phosphate + beta-D-fructose 6-phosphate. It participates in carbohydrate degradation; pentose phosphate pathway; D-glyceraldehyde 3-phosphate and beta-D-fructose 6-phosphate from D-ribose 5-phosphate and D-xylulose 5-phosphate (non-oxidative stage): step 2/3. Functionally, transaldolase is important for the balance of metabolites in the pentose-phosphate pathway. This is Transaldolase from Teredinibacter turnerae (strain ATCC 39867 / T7901).